The chain runs to 408 residues: Argininosuccinate synthase (408 aa).

8–16 (AYSGGLDTS) contributes to the ATP binding site. Tyrosine 86 contributes to the L-citrulline binding site. Glycine 116 serves as a coordination point for ATP. Residues threonine 118, asparagine 122, and aspartate 123 each contribute to the L-aspartate site. An L-citrulline-binding site is contributed by asparagine 122. L-citrulline contacts are provided by arginine 126, serine 174, glutamate 259, and tyrosine 271.

The protein belongs to the argininosuccinate synthase family. Type 1 subfamily. Homotetramer.

It localises to the cytoplasm. It catalyses the reaction L-citrulline + L-aspartate + ATP = 2-(N(omega)-L-arginino)succinate + AMP + diphosphate + H(+). The protein operates within amino-acid biosynthesis; L-arginine biosynthesis; L-arginine from L-ornithine and carbamoyl phosphate: step 2/3. In Leuconostoc mesenteroides subsp. mesenteroides (strain ATCC 8293 / DSM 20343 / BCRC 11652 / CCM 1803 / JCM 6124 / NCDO 523 / NBRC 100496 / NCIMB 8023 / NCTC 12954 / NRRL B-1118 / 37Y), this protein is Argininosuccinate synthase.